A 283-amino-acid polypeptide reads, in one-letter code: Alkaline ceramidase (283 aa).

Ca(2+) contacts are provided by Asp28, Trp29, Glu31, Asn33, and Glu42. A run of 2 helical transmembrane segments spans residues 43-63 (FVNT…IMLF) and 69-89 (FVTP…LSSM). His92 serves as a coordination point for Zn(2+). A run of 4 helical transmembrane segments spans residues 98–118 (IGQL…FSLF), 134–151 (TFSW…GLSW), 154–174 (PIVN…MLYT), and 187–209 (LGIR…RIFC). Zn(2+) contacts are provided by His221 and His225. Residues 222–242 (GFWHIFIFIAAYTVLVLFAYF) traverse the membrane as a helical segment.

The protein belongs to the alkaline ceramidase family. Zn(2+) serves as cofactor. As to expression, expressed in the central midgut of late embryos. In brain, it is present at the interhemispheric junction and in groups of cells in the central brain.

The protein resides in the membrane. The enzyme catalyses an N-acylsphing-4-enine + H2O = sphing-4-enine + a fatty acid. Functionally, hydrolyzes the sphingolipid ceramide into sphingosine and free fatty acid. The polypeptide is Alkaline ceramidase (bwa) (Drosophila melanogaster (Fruit fly)).